A 105-amino-acid chain; its full sequence is Precursor of CEP15 (105 aa).

The N-terminal stretch at 1 to 29 (MDATKIKFDVILLSFLLIISGIPSNLGLS) is a signal peptide. A propeptide spanning residues 30-90 (TSVRGTTRSE…PSPPVPDYDD (61 aa)) is cleaved from the precursor. Residues 68–80 (DYYDGGSSSSTTS) show a composition bias toward low complexity. The tract at residues 68-105 (DYYDGGSSSSTTSPSPPVPDYDDIYRRQGDVPSPGIGH) is disordered. Hydroxyproline occurs at positions 99 and 101.

This sequence belongs to the C-terminally encoded plant signaling peptide (CEP) family. As to quaternary structure, interacts with CEP receptors (e.g. CEPR1 and CEPR2). In terms of processing, the mature small signaling peptide is generated by proteolytic processing of the longer precursor.

The protein localises to the secreted. Its subcellular location is the extracellular space. The protein resides in the apoplast. Functionally, extracellular signaling peptide that may regulate primary root growth rate and systemic nitrogen (N)-demand signaling. The polypeptide is Precursor of CEP15 (Arabidopsis thaliana (Mouse-ear cress)).